Consider the following 969-residue polypeptide: RNA polymerase-associated protein RapA (969 aa).

The 171-residue stretch at Glu-164 to Asp-334 folds into the Helicase ATP-binding domain. Asp-177–Thr-184 lines the ATP pocket. Positions Asp-280–His-283 match the DEAH box motif. The Helicase C-terminal domain occupies Arg-492–Ile-668.

This sequence belongs to the SNF2/RAD54 helicase family. RapA subfamily. In terms of assembly, interacts with the RNAP. Has a higher affinity for the core RNAP than for the holoenzyme. Its ATPase activity is stimulated by binding to RNAP.

Functionally, transcription regulator that activates transcription by stimulating RNA polymerase (RNAP) recycling in case of stress conditions such as supercoiled DNA or high salt concentrations. Probably acts by releasing the RNAP, when it is trapped or immobilized on tightly supercoiled DNA. Does not activate transcription on linear DNA. Probably not involved in DNA repair. The sequence is that of RNA polymerase-associated protein RapA from Vibrio vulnificus (strain YJ016).